The primary structure comprises 946 residues: Bifunctional glutamine synthetase adenylyltransferase/adenylyl-removing enzyme (946 aa).

An adenylyl removase region spans residues 1–440; sequence MKPLSSPLQQ…VFNELIGDDE (440 aa). The interval 449–946 is adenylyl transferase; it reads SEQWRELWQD…ASWQKWLVEE (498 aa).

It belongs to the GlnE family. The cofactor is Mg(2+).

It catalyses the reaction [glutamine synthetase]-O(4)-(5'-adenylyl)-L-tyrosine + phosphate = [glutamine synthetase]-L-tyrosine + ADP. The catalysed reaction is [glutamine synthetase]-L-tyrosine + ATP = [glutamine synthetase]-O(4)-(5'-adenylyl)-L-tyrosine + diphosphate. Functionally, involved in the regulation of glutamine synthetase GlnA, a key enzyme in the process to assimilate ammonia. When cellular nitrogen levels are high, the C-terminal adenylyl transferase (AT) inactivates GlnA by covalent transfer of an adenylyl group from ATP to specific tyrosine residue of GlnA, thus reducing its activity. Conversely, when nitrogen levels are low, the N-terminal adenylyl removase (AR) activates GlnA by removing the adenylyl group by phosphorolysis, increasing its activity. The regulatory region of GlnE binds the signal transduction protein PII (GlnB) which indicates the nitrogen status of the cell. The protein is Bifunctional glutamine synthetase adenylyltransferase/adenylyl-removing enzyme of Escherichia coli O6:H1 (strain CFT073 / ATCC 700928 / UPEC).